The following is a 478-amino-acid chain: Proline--tRNA ligase (478 aa).

The protein belongs to the class-II aminoacyl-tRNA synthetase family. ProS type 3 subfamily. As to quaternary structure, homodimer.

It localises to the cytoplasm. It carries out the reaction tRNA(Pro) + L-proline + ATP = L-prolyl-tRNA(Pro) + AMP + diphosphate. Its function is as follows. Catalyzes the attachment of proline to tRNA(Pro) in a two-step reaction: proline is first activated by ATP to form Pro-AMP and then transferred to the acceptor end of tRNA(Pro). The protein is Proline--tRNA ligase of Clostridium botulinum (strain Kyoto / Type A2).